The following is a 242-amino-acid chain: Large ribosomal subunit protein uL1 (242 aa).

It belongs to the universal ribosomal protein uL1 family. Part of the 50S ribosomal subunit.

Its function is as follows. Binds directly to 23S rRNA. The L1 stalk is quite mobile in the ribosome, and is involved in E site tRNA release. In terms of biological role, protein L1 is also a translational repressor protein, it controls the translation of the L11 operon by binding to its mRNA. The chain is Large ribosomal subunit protein uL1 from Kitasatospora aureofaciens (Streptomyces aureofaciens).